Reading from the N-terminus, the 356-residue chain is Retinoic acid-induced protein 3 (356 aa).

Residues 1–35 lie on the Extracellular side of the membrane; that stretch reads MTTPTTAPSGCRSDLDSRYHRLCDLAEGWGIALET. The helical transmembrane segment at 36–56 threads the bilayer; sequence LAAVGAVATVACMFALVFLIC. Residues 57-68 are Cytoplasmic-facing; sequence KVQDSNKRKMLP. The chain crosses the membrane as a helical span at residues 69-89; sequence AQFLFLLGVLGVFGLTFAFII. Topologically, residues 90 to 101 are extracellular; it reads KLDGATGPTRFF. Residues 102–122 traverse the membrane as a helical segment; sequence LFGVLFAICFSCLLAHAFNLI. The Cytoplasmic portion of the chain corresponds to 123–131; that stretch reads KLVRGRKPL. Residues 132–152 form a helical membrane-spanning segment; the sequence is SWLVILSLAVGFSLVQDVIAI. Topologically, residues 153-178 are extracellular; it reads EYLVLTMNRTNVNVFSELPAPRRNED. N-linked (GlcNAc...) asparagine glycosylation is present at Asn160. A helical transmembrane segment spans residues 179–199; sequence FVMLLIYVLVLMVLTFFTSFL. Topologically, residues 200–214 are cytoplasmic; the sequence is VFCGSFSGWKRHGFH. A helical transmembrane segment spans residues 215–235; it reads ICFTSFLSIAIWVAWIVLLLI. At 236–244 the chain is on the extracellular side; the sequence is PDIDRKWDD. A helical transmembrane segment spans residues 245-265; the sequence is TILSTALVANGWVFLAFYILP. Over 266-356 the chain is Cytoplasmic; the sequence is EFRQLPRQRS…NDYEGRKGDS (91 aa). Ser303 is subject to Phosphoserine. Residues Tyr318 and Tyr321 each carry the phosphotyrosine modification. The disordered stretch occupies residues 336–356; sequence IPRAQAPASPYNDYEGRKGDS. At Ser344 the chain carries Phosphoserine. Residues Tyr346 and Tyr349 each carry the phosphotyrosine modification.

Belongs to the G-protein coupled receptor 3 family. In terms of assembly, interacts (via its transmembrane domain) with EGFR. Post-translationally, phosphorylated in two conserved double-tyrosine motifs, Tyr 318/Tyr-321 and Tyr-346/Tyr-349 by EGFR. Tyr-318 and Tyr-321 are the preferred residues responsible for EGFR-mediated GPRC5A phosphorylation. As to expression, expressed predominantly in normal fetal and adult lung. Almost undetectable or expressed at very low levels in other tissues.

It localises to the cell membrane. In terms of biological role, orphan receptor. Could be involved in modulating differentiation and maintaining homeostasis of epithelial cells. This retinoic acid-inducible GPCR provides evidence for a possible interaction between retinoid and G-protein signaling pathways. Functions as a negative modulator of EGFR signaling. Acts as a lung tumor suppressor. The chain is Retinoic acid-induced protein 3 (Gprc5a) from Mus musculus (Mouse).